Here is a 330-residue protein sequence, read N- to C-terminus: uncharacterized protein (330 aa).

Residues A96 to L256 enclose the JmjC domain. Residues H145, D147, and H224 each contribute to the Fe cation site.

It belongs to the ROX family. Requires Fe(2+) as cofactor.

This is an uncharacterized protein from Bacillus subtilis (strain 168).